The following is a 1292-amino-acid chain: ABC multidrug transporter MDR5 (1292 aa).

Residues 1–43 (MTEEPKPVTPVLRDGEAGLDTTAPTEAGSLGEEAPKKEADGIV) are disordered. The next 2 helical transmembrane spans lie at 79–99 (ICGF…TIIF) and 128–148 (LWFV…TICF). One can recognise an ABC transmembrane type-1 1 domain in the interval 81–370 (GFFAAVASGT…IAPTLGEFTK (290 aa)). N-linked (GlcNAc...) asparagine glycosylation occurs at Asn-149. 4 consecutive transmembrane segments (helical) span residues 202-222 (VGTC…AFTQ), 226-246 (LTLP…ITVA), 314-334 (EFFI…KLLL), and 344-364 (ILTV…IAPT). The 246-residue stretch at 405 to 650 (LELSNAVFSY…KGQYWSLVNA (246 aa)) folds into the ABC transporter 1 domain. An ATP-binding site is contributed by 440-447 (GASGSGKS). A glycan (N-linked (GlcNAc...) asparagine) is linked at Asn-494. The segment at 656–691 (ASDDSSSDTDKETDTQPAEILEKHATTKSTHSKVPH) is disordered. A compositionally biased stretch (basic and acidic residues) spans 663–680 (DTDKETDTQPAEILEKHA). The next 2 membrane-spanning stretches (helical) occupy residues 720 to 740 (HWLF…AFPA) and 768 to 788 (LMFF…GFFL). The region spanning 725-1012 (LLGGIASVVS…IFGFTMNTTK (288 aa)) is the ABC transmembrane type-1 2 domain. N-linked (GlcNAc...) asparagine glycosylation is present at Asn-820. 4 helical membrane passes run 844-864 (IGLI…ALVT), 866-886 (WKLA…AGFI), 949-969 (IAMI…ALAF), and 986-1006 (FFVI…IFGF). N-linked (GlcNAc...) asparagine glycans are attached at residues Asn-1009, Asn-1031, and Asn-1052. Residues 1048-1285 (VEFRNVSFSY…KGRYFEMCKA (238 aa)) enclose the ABC transporter 2 domain. 1083–1090 (GPSGCGKT) provides a ligand contact to ATP.

It belongs to the ABC transporter superfamily. ABCB family. Multidrug resistance exporter (TC 3.A.1.201) subfamily.

It is found in the cell membrane. It carries out the reaction itraconazole(in) + ATP + H2O = itraconazole(out) + ADP + phosphate + H(+). In terms of biological role, pleiotropic ABC efflux transporter involved in the modulation susceptibility to itraconazole. This chain is ABC multidrug transporter MDR5, found in Trichophyton rubrum (strain ATCC MYA-4607 / CBS 118892) (Athlete's foot fungus).